The chain runs to 2089 residues: Mediator of DNA damage checkpoint protein 1 (2089 aa).

The segment covering Met1–Gln19 has biased composition (acidic residues). A disordered region spans residues Met1 to Glu22. Positions Met1–Thr150 are interaction with CHEK2. The tract at residues Glu2–Thr220 is interaction with the MRN complex. Position 4 is a phosphothreonine; by ATM (Thr4). In terms of domain architecture, FHA spans Asn54 to Lys105. Ser108 is subject to Phosphoserine. A required for nuclear localization (NLS1) region spans residues Leu145–Glu568. Residue Thr146 is modified to Phosphothreonine. Phosphoserine; by CK2 is present on Ser168. The residue at position 176 (Ser176) is a Phosphoserine. Disordered regions lie at residues Arg185–Ser248, Asp261–Asn280, and Gly286–His317. 2 positions are modified to phosphoserine; by CK2: Ser196 and Ser218. The residue at position 220 (Thr220) is a Phosphothreonine; by CK2. The segment covering Asp261–Val274 has biased composition (basic and acidic residues). At Ser299 the chain carries Phosphoserine; by CK2. Residue Thr301 is modified to Phosphothreonine; by CK2. A compositionally biased stretch (basic and acidic residues) spans Asp306 to His317. Phosphoserine; by CK2 is present on Ser329. Thr331 carries the post-translational modification Phosphothreonine; by CK2. At Ser372 the chain carries Phosphoserine. Ser376 is subject to Phosphoserine; by CK2. At Thr378 the chain carries Phosphothreonine; by CK2. A phosphoserine mark is found at Ser394 and Ser397. A Phosphoserine; by CK2 modification is found at Ser402. Thr404 carries the post-translational modification Phosphothreonine; by CK2. Phosphoserine is present on Ser411. The residue at position 449 (Thr449) is a Phosphothreonine. Phosphoserine; by CK2 is present on Ser453. A Phosphothreonine; by CK2 modification is found at Thr455. Residues Arg482–Ala515 are disordered. 6 positions are modified to phosphoserine: Ser485, Ser495, Ser498, Ser504, Ser505, and Ser513. Position 523 is a phosphothreonine (Thr523). Ser590 is subject to Phosphoserine. Lys616 participates in a covalent cross-link: Glycyl lysine isopeptide (Lys-Gly) (interchain with G-Cter in SUMO1); alternate. A Glycyl lysine isopeptide (Lys-Gly) (interchain with G-Cter in SUMO2); alternate cross-link involves residue Lys616. Disordered stretches follow at residues Asp653–Gly689 and Ser780–Asn1887. Positions Gly671 to Glu685 are enriched in basic and acidic residues. A phosphoserine mark is found at Ser780 and Ser793. Lys812 is modified (N6-acetyllysine). Basic and acidic residues-rich tracts occupy residues Glu819–Thr844, Glu851–Lys862, Asp868–Val905, and Ala914–Pro951. 2 positions are modified to phosphoserine: Ser955 and Ser998. Polar residues predominate over residues Ser955–Pro965. Basic and acidic residues predominate over residues Lys1016–Gln1031. At Ser1033 the chain carries Phosphoserine. Over residues Pro1040 to Lys1051 the composition is skewed to pro residues. Phosphoserine is present on residues Ser1068 and Ser1086. The segment covering Pro1103–Ser1113 has biased composition (basic residues). Residues Pro1129–Lys1156 are compositionally biased toward polar residues. The interaction with the PRKDC complex stretch occupies residues Ser1148 to Glu1610. Thr1157 is modified (phosphothreonine). Positions Gln1169–Thr1187 are enriched in polar residues. Phosphothreonine is present on Thr1198. Polar residues predominate over residues Gln1210–Thr1228. Ser1235 carries the phosphoserine modification. Thr1239 carries the phosphothreonine modification. Polar residues predominate over residues Gln1251–Ala1268. 2 positions are modified to phosphothreonine: Thr1280 and Thr1302. Composition is skewed to low complexity over residues Lys1304 to Ser1318 and Thr1347 to Ser1359. Over residues Pro1375–Ala1391 the composition is skewed to polar residues. Residues Ser1399 and Ser1400 each carry the phosphoserine modification. Lys1402 carries the post-translational modification N6-acetyllysine. Thr1403 carries the phosphothreonine modification. Lys1413 is covalently cross-linked (Glycyl lysine isopeptide (Lys-Gly) (interchain with G-Cter in SUMO1); alternate). Lys1413 is covalently cross-linked (Glycyl lysine isopeptide (Lys-Gly) (interchain with G-Cter in SUMO2); alternate). Composition is skewed to polar residues over residues Pro1416–Thr1444, Gln1456–Arg1475, Ala1498–Thr1514, and Gln1538–Ala1555. A phosphothreonine mark is found at Thr1425 and Thr1466. Thr1548 carries the phosphothreonine modification. Phosphoserine is present on Ser1564. Residues Thr1567 and Thr1589 each carry the phosphothreonine modification. Positions Gln1579–Ala1596 are enriched in polar residues. A Phosphoserine modification is found at Ser1604. Thr1608 carries the post-translational modification Phosphothreonine. Pro residues predominate over residues Pro1611–His1620. A compositionally biased stretch (polar residues) spans Ser1624 to Arg1636. Thr1630, Thr1664, and Thr1671 each carry phosphothreonine. A compositionally biased stretch (polar residues) spans Gly1678 to Val1689. Phosphoserine is present on Ser1681. Residue Thr1697 is modified to Phosphothreonine. The segment covering Pro1698–Ser1719 has biased composition (polar residues). The tract at residues Pro1698–Thr2089 is required for nuclear localization (NLS2). Phosphoserine is present on residues Ser1702 and Ser1711. Lys1740 participates in a covalent cross-link: Glycyl lysine isopeptide (Lys-Gly) (interchain with G-Cter in SUMO2). At Ser1775 the chain carries Phosphoserine. Residue Lys1790 forms a Glycyl lysine isopeptide (Lys-Gly) (interchain with G-Cter in SUMO2) linkage. Phosphothreonine is present on Thr1800. Ser1820 is modified (phosphoserine). Over residues His1823–Thr1836 the composition is skewed to polar residues. Residue Lys1840 forms a Glycyl lysine isopeptide (Lys-Gly) (interchain with G-Cter in SUMO1); alternate linkage. Lys1840 participates in a covalent cross-link: Glycyl lysine isopeptide (Lys-Gly) (interchain with G-Cter in SUMO2); alternate. A compositionally biased stretch (basic and acidic residues) spans Ala1847–Val1857. Thr1858 bears the Phosphothreonine mark. BRCT domains follow at residues Ala1892–Val1970 and Arg1991–Ser2082. Arg1943 carries the omega-N-methylarginine modification.

In terms of assembly, homodimer. Interacts with H2AX, which requires phosphorylation of H2AX on 'Ser-139'. Interacts with the MRN complex, composed of MRE11, RAD50, and NBN. Interacts with CHEK2, which requires ATM-mediated phosphorylation of 'Thr-68' within the FHA domain of CHEK2. Interacts constitutively with the BRCA1-BARD1 complex, SMC1A and TP53BP1. Interacts with ATM and FANCD2, and these interactions are reduced upon DNA damage. Also interacts with the PRKDC complex, composed of XRCC6/KU70, XRCC5/KU80 and PRKDC/XRCC7. This interaction may be required for PRKDC autophosphorylation, which is essential for DNA double strand break (DSB) repair. When phosphorylated by ATM, interacts with RNF8 (via FHA domain). Interacts with CEP164. When phosphorylated, interacts with APTX (via FHA-like domain). Interacts (when phosphorylated) with TOPBP1; promoting TOPBP1 localization to DNA damage sites during mitosis. Interacts (when phosphorylated) with NBN; promoting NBN and MRN complex localization to DNA damage sites. Phosphorylated upon exposure to ionizing radiation (IR), ultraviolet radiation (UV), and hydroxyurea (HU). Phosphorylation in response to IR requires ATM, NBN, and possibly CHEK2. Also phosphorylated during the G2/M phase of the cell cycle and during activation of the mitotic spindle checkpoint. Phosphorylation at Thr-4 by ATM stabilizes and enhances homodimerization via the FHA domain. Phosphorylated at Ser-168 and Ser-196 by CK2 in response to DNA damage during mitosis, promoting interaction with TOPBP1. Phosphorylated by CK2 in response to DNA damage, promoting interaction with NBN and recruitment of the MRN complex to DNA damage sites. Post-translationally, sumoylation at Lys-1840 by PIAS4 following DNA damage promotes ubiquitin-mediated degradation. In terms of processing, ubiquitinated by RNF4, leading to proteasomal degradation; undergoes 'Lys-48'-linked polyubiquitination. In terms of tissue distribution, highly expressed in testis.

It localises to the nucleus. The protein resides in the chromosome. Its function is as follows. Histone reader protein required for checkpoint-mediated cell cycle arrest in response to DNA damage within both the S phase and G2/M phases of the cell cycle. Specifically recognizes and binds histone H2AX phosphorylated at 'Ser-139', a marker of DNA damage, serving as a scaffold for the recruitment of DNA repair and signal transduction proteins to discrete foci of DNA damage sites. Also required for downstream events subsequent to the recruitment of these proteins. These include phosphorylation and activation of the ATM, CHEK1 and CHEK2 kinases, and stabilization of TP53/p53 and apoptosis. ATM and CHEK2 may also be activated independently by a parallel pathway mediated by TP53BP1. Required for chromosomal stability during mitosis by promoting recruitment of TOPBP1 to DNA double strand breaks (DSBs): TOPBP1 forms filamentous assemblies that bridge MDC1 and tether broken chromosomes during mitosis. Required for the repair of DSBs via homologous recombination by promoting recruitment of NBN component of the MRN complex to DSBs. The protein is Mediator of DNA damage checkpoint protein 1 of Homo sapiens (Human).